The primary structure comprises 105 residues: Large ribosomal subunit protein uL24 (105 aa).

The protein belongs to the universal ribosomal protein uL24 family. As to quaternary structure, part of the 50S ribosomal subunit.

Its function is as follows. One of two assembly initiator proteins, it binds directly to the 5'-end of the 23S rRNA, where it nucleates assembly of the 50S subunit. One of the proteins that surrounds the polypeptide exit tunnel on the outside of the subunit. In Cellvibrio japonicus (strain Ueda107) (Pseudomonas fluorescens subsp. cellulosa), this protein is Large ribosomal subunit protein uL24.